Here is a 619-residue protein sequence, read N- to C-terminus: Phosphomethylpyrimidine synthase (619 aa).

Polar residues predominate over residues 1 to 11 (MHEQRSLTMNA). The tract at residues 1 to 25 (MHEQRSLTMNALTPAVSTGPLPASR) is disordered. Residues Asn-220, Met-249, Tyr-278, His-314, 334–336 (SRG), 375–378 (DGLR), and Glu-414 contribute to the substrate site. Zn(2+) is bound at residue His-418. Residue Tyr-441 coordinates substrate. His-482 serves as a coordination point for Zn(2+). [4Fe-4S] cluster-binding residues include Cys-562, Cys-565, and Cys-570.

The protein belongs to the ThiC family. Homodimer. [4Fe-4S] cluster serves as cofactor.

It carries out the reaction 5-amino-1-(5-phospho-beta-D-ribosyl)imidazole + S-adenosyl-L-methionine = 4-amino-2-methyl-5-(phosphooxymethyl)pyrimidine + CO + 5'-deoxyadenosine + formate + L-methionine + 3 H(+). Its pathway is cofactor biosynthesis; thiamine diphosphate biosynthesis. Functionally, catalyzes the synthesis of the hydroxymethylpyrimidine phosphate (HMP-P) moiety of thiamine from aminoimidazole ribotide (AIR) in a radical S-adenosyl-L-methionine (SAM)-dependent reaction. This chain is Phosphomethylpyrimidine synthase, found in Mesorhizobium japonicum (strain LMG 29417 / CECT 9101 / MAFF 303099) (Mesorhizobium loti (strain MAFF 303099)).